The primary structure comprises 508 residues: Kinesin light chain 3 (508 aa).

The segment at 1–20 (MSVQVAAPGSTGLGPERLNP) is disordered. The stretch at 88–150 (LLALSAHVSV…EEEKSHLQFL (63 aa)) forms a coiled coil. The disordered stretch occupies residues 154–197 (RQYDPPEESQRPESPPRRDSLASLFPSEEEEKKGPEAAGAAAAQ). The segment covering 161–173 (ESQRPESPPRRDS) has biased composition (basic and acidic residues). Ser173 bears the Phosphoserine mark. TPR repeat units lie at residues 207 to 240 (LRTL…LERS), 249 to 282 (ATML…REQT), 291 to 324 (AATL…REKV), 333 to 366 (AKQL…YEAL), and 375 to 408 (AKTK…EALP). The disordered stretch occupies residues 409-441 (APLGAPQGGTAGDTQQQVLRRSSSFSKLRESIR). The segment covering 420–434 (GDTQQQVLRRSSSFS) has biased composition (polar residues). Ser467 carries the phosphoserine modification. The segment at 486–508 (LSTRHLSEAPRTLSISTQDLSPR) is disordered. Over residues 498-508 (LSISTQDLSPR) the composition is skewed to polar residues. The residue at position 502 (Thr502) is a Phosphothreonine. Ser506 carries the phosphoserine modification.

The protein belongs to the kinesin light chain family. Oligomer composed of two heavy chains and two light chains. Associates with microtubulin in an ATP-dependent manner. Interacts with KIF5C. Interacts with ODF1. Interacts with LRGUK. Interacts with VDAC2. In terms of tissue distribution, expressed in postmeiotic male germ cells (at protein level). Expressed in the testes (at protein level). Expressed in spleen, intestine, brain and ovary.

The protein localises to the cytoplasm. Its subcellular location is the cytoskeleton. The protein resides in the mitochondrion. Kinesin is a microtubule-associated force-producing protein that may play a role in organelle transport. Plays a role during spermiogenesis in the development of the sperm tail midpiece and in the normal function of spermatozoa. May play a role in the formation of the mitochondrial sheath formation in the developing spermatid midpiece. This is Kinesin light chain 3 (Klc3) from Mus musculus (Mouse).